Consider the following 530-residue polypeptide: Ubiquitin carboxyl-terminal hydrolase 17-like protein 12 (530 aa).

Residues 80-375 (AGLQNMGNTC…QAYVLFYIQK (296 aa)) enclose the USP domain. Cysteine 89 functions as the Nucleophile in the catalytic mechanism. The active-site Proton acceptor is the histidine 334. Composition is skewed to basic and acidic residues over residues 382 to 392 (SESVSRGREPR) and 398 to 412 (DTDR…KRDH). 2 disordered regions span residues 382–412 (SESV…KRDH) and 477–530 (NHHP…LVCQ). The span at 484–495 (SSLLKLSSTTPT) shows a compositional bias: low complexity. The segment covering 496–505 (HQESMNTGTL) has biased composition (polar residues). Positions 510-524 (GRARRSKGKNKHSKR) are enriched in basic residues.

This sequence belongs to the peptidase C19 family. USP17 subfamily.

It is found in the nucleus. It localises to the endoplasmic reticulum. The enzyme catalyses Thiol-dependent hydrolysis of ester, thioester, amide, peptide and isopeptide bonds formed by the C-terminal Gly of ubiquitin (a 76-residue protein attached to proteins as an intracellular targeting signal).. In terms of biological role, deubiquitinating enzyme that removes conjugated ubiquitin from specific proteins to regulate different cellular processes that may include cell proliferation, progression through the cell cycle, apoptosis, cell migration, and the cellular response to viral infection. This is Ubiquitin carboxyl-terminal hydrolase 17-like protein 12 (USP17L12) from Homo sapiens (Human).